We begin with the raw amino-acid sequence, 161 residues long: MPSFDIVSKMNEVDLRNAVDNAVREVSTRFDFRGVEATIELKDLTVTLRSESDFQVRQLEDLFRNHCSKRNLSTSGVDIEDEPVHSGKFYTLTMTFKQGIDQPTAKEIVKYIKETKAKVQTSIQGDKVRVTGKKRDDLQETIALLKKSNIELPLQYENFRD.

Belongs to the YajQ family.

Its function is as follows. Nucleotide-binding protein. The sequence is that of Nucleotide-binding protein lpl1175 from Legionella pneumophila (strain Lens).